Reading from the N-terminus, the 389-residue chain is Putative F-box protein At3g10240 (389 aa).

A disordered region spans residues 1–26; sequence MEQQEEKRKIKAYQRKSKRSKSGSSS. A compositionally biased stretch (basic residues) spans 9–21; it reads KIKAYQRKSKRSK. An F-box domain is found at 21–66; sequence KSGSSSIPLDLVSEILLRLPEKSVARFRCVSKPWSSITTEPYFINL.

The polypeptide is Putative F-box protein At3g10240 (Arabidopsis thaliana (Mouse-ear cress)).